A 372-amino-acid chain; its full sequence is 4-hydroxy-3-methylbut-2-en-1-yl diphosphate synthase (flavodoxin) (372 aa).

[4Fe-4S] cluster-binding residues include Cys270, Cys273, Cys305, and Glu312.

It belongs to the IspG family. [4Fe-4S] cluster serves as cofactor.

It carries out the reaction (2E)-4-hydroxy-3-methylbut-2-enyl diphosphate + oxidized [flavodoxin] + H2O + 2 H(+) = 2-C-methyl-D-erythritol 2,4-cyclic diphosphate + reduced [flavodoxin]. The protein operates within isoprenoid biosynthesis; isopentenyl diphosphate biosynthesis via DXP pathway; isopentenyl diphosphate from 1-deoxy-D-xylulose 5-phosphate: step 5/6. In terms of biological role, converts 2C-methyl-D-erythritol 2,4-cyclodiphosphate (ME-2,4cPP) into 1-hydroxy-2-methyl-2-(E)-butenyl 4-diphosphate. This is 4-hydroxy-3-methylbut-2-en-1-yl diphosphate synthase (flavodoxin) from Alcanivorax borkumensis (strain ATCC 700651 / DSM 11573 / NCIMB 13689 / SK2).